The chain runs to 751 residues: Proton-associated sugar transporter A (751 aa).

A run of 6 helical transmembrane segments spans residues Ile-93–Leu-113, Ser-123–Trp-143, Arg-155–Gly-175, Trp-191–Asp-211, Ile-233–Trp-253, and Val-268–Ile-288. Phosphothreonine is present on Thr-500. Helical transmembrane passes span Gly-536–Phe-556, Val-576–Ile-596, Val-606–Leu-626, Leu-630–Leu-650, Phe-688–Ala-708, and Gly-710–Val-730.

The protein belongs to the glycoside-pentoside-hexuronide (GPH) cation symporter transporter (TC 2.A.2) family. In terms of tissue distribution, predominantly expressed in brain.

Its subcellular location is the membrane. The enzyme catalyses D-galactose(in) + H(+)(in) = D-galactose(out) + H(+)(out). The catalysed reaction is D-glucose(out) + H(+)(out) = D-glucose(in) + H(+)(in). Its function is as follows. Proton-associated glucose transporter in the brain. The chain is Proton-associated sugar transporter A from Rattus norvegicus (Rat).